The primary structure comprises 177 residues: Large ribosomal subunit protein uL5 (177 aa).

It belongs to the universal ribosomal protein uL5 family. As to quaternary structure, part of the 50S ribosomal subunit; part of the 5S rRNA/L5/L18/L25 subcomplex. Contacts the 5S rRNA and the P site tRNA. Forms a bridge to the 30S subunit in the 70S ribosome.

In terms of biological role, this is one of the proteins that bind and probably mediate the attachment of the 5S RNA into the large ribosomal subunit, where it forms part of the central protuberance. In the 70S ribosome it contacts protein S13 of the 30S subunit (bridge B1b), connecting the 2 subunits; this bridge is implicated in subunit movement. Contacts the P site tRNA; the 5S rRNA and some of its associated proteins might help stabilize positioning of ribosome-bound tRNAs. This is Large ribosomal subunit protein uL5 from Ehrlichia ruminantium (strain Welgevonden).